Here is a 299-residue protein sequence, read N- to C-terminus: MSDLPDTDFTQRFIFDERDVRGEWVSLDDSYAAVLARHEYPQPVKVLLGELMAATALLVGAMKFDGLLILQARSAGPIPLLMVECSSEREIRGMARYEADQISADATLSQLMPDGHLTLTIDPVKGQRYQGTVDLDGANLSECFTNYFVQSQQLNTRFWLNAAGGKARGLLLQQLPRDRQPDDEEREDSWQHVVALAKTLKPEEWTEGNETLLHRLYHEDAVRLFDIQPLRFNCSCSRERSGNALVSLGEHDAKALVDECGGTVEIDCQFCNERYFFDASDVAQLFAGGGTDVASETRH.

2 disulfides stabilise this stretch: Cys234-Cys236 and Cys268-Cys271.

The protein belongs to the HSP33 family. Post-translationally, under oxidizing conditions two disulfide bonds are formed involving the reactive cysteines. Under reducing conditions zinc is bound to the reactive cysteines and the protein is inactive.

The protein localises to the cytoplasm. Its function is as follows. Redox regulated molecular chaperone. Protects both thermally unfolding and oxidatively damaged proteins from irreversible aggregation. Plays an important role in the bacterial defense system toward oxidative stress. This is 33 kDa chaperonin from Pseudomonas putida (strain ATCC 700007 / DSM 6899 / JCM 31910 / BCRC 17059 / LMG 24140 / F1).